The sequence spans 198 residues: Recombination protein RecR (198 aa).

The C4-type zinc finger occupies 57-72; it reads CSVCGHITDTDPCYIC. A Toprim domain is found at 80 to 175; the sequence is SMICVVEETK…KVTRLAHGLP (96 aa).

It belongs to the RecR family.

May play a role in DNA repair. It seems to be involved in an RecBC-independent recombinational process of DNA repair. It may act with RecF and RecO. The sequence is that of Recombination protein RecR from Macrococcus caseolyticus (strain JCSC5402) (Macrococcoides caseolyticum).